Here is a 149-residue protein sequence, read N- to C-terminus: SsrA-binding protein (149 aa).

Belongs to the SmpB family.

It is found in the cytoplasm. Its function is as follows. Required for rescue of stalled ribosomes mediated by trans-translation. Binds to transfer-messenger RNA (tmRNA), required for stable association of tmRNA with ribosomes. tmRNA and SmpB together mimic tRNA shape, replacing the anticodon stem-loop with SmpB. tmRNA is encoded by the ssrA gene; the 2 termini fold to resemble tRNA(Ala) and it encodes a 'tag peptide', a short internal open reading frame. During trans-translation Ala-aminoacylated tmRNA acts like a tRNA, entering the A-site of stalled ribosomes, displacing the stalled mRNA. The ribosome then switches to translate the ORF on the tmRNA; the nascent peptide is terminated with the 'tag peptide' encoded by the tmRNA and targeted for degradation. The ribosome is freed to recommence translation, which seems to be the essential function of trans-translation. This is SsrA-binding protein from Acholeplasma laidlawii (strain PG-8A).